A 109-amino-acid polypeptide reads, in one-letter code: Nascent polypeptide-associated complex protein (109 aa).

An NAC-A/B domain is found at 3–70 (PMNPKQMKKM…YEVVKRPPKI (68 aa)).

It belongs to the NAC-alpha family. In terms of assembly, homodimer. Interacts with the ribosome. Binds ribosomal RNA.

In terms of biological role, contacts the emerging nascent chain on the ribosome. The chain is Nascent polypeptide-associated complex protein from Archaeoglobus fulgidus (strain ATCC 49558 / DSM 4304 / JCM 9628 / NBRC 100126 / VC-16).